Consider the following 392-residue polypeptide: General receptor for phosphoinositides 1-associated scaffold protein (392 aa).

The tract at residues 1 to 50 (MTLRRLRKLQQKEEATAAPDPAGRAPDSEAARAAPLPSGPPAAAAPPGAP) is disordered. Over residues 37–49 (PSGPPAAAAPPGA) the composition is skewed to pro residues. At Thr-76 the chain carries Phosphothreonine. At Ser-93 the chain carries Phosphoserine. In terms of domain architecture, PDZ spans 100–189 (VLTLEKGDNQ…VLRLETLYGT (90 aa)). The interaction with PSCD3 stretch occupies residues 180-257 (VLRLETLYGT…GAGLLPGSLP (78 aa)). Tyr-236 carries the post-translational modification Phosphotyrosine. Arg-269 is modified (omega-N-methylarginine). The disordered stretch occupies residues 294 to 315 (PQALPPPPPPARALGPSSAETP). Ser-384 is subject to Phosphoserine.

In terms of assembly, heteromer. Composed of TAMALIN, CYTH2 and at least one GRM1. Also interacts with GRM2, GRM3 and GRM5. Interacts with CYTH3. As to expression, highly expressed in brain, heart and lung, and to a lower extent in embryo, kidney and ovary.

The protein localises to the cytoplasm. It localises to the perinuclear region. It is found in the cell membrane. The protein resides in the postsynaptic cell membrane. In terms of biological role, plays a role in intracellular trafficking and contributes to the macromolecular organization of group 1 metabotropic glutamate receptors (mGluRs) at synapses. In Mus musculus (Mouse), this protein is General receptor for phosphoinositides 1-associated scaffold protein.